The chain runs to 547 residues: Glucose-6-phosphate isomerase (547 aa).

The active-site Proton donor is the Glu-353. Active-site residues include His-384 and Lys-512.

The protein belongs to the GPI family.

The protein localises to the cytoplasm. The catalysed reaction is alpha-D-glucose 6-phosphate = beta-D-fructose 6-phosphate. The protein operates within carbohydrate biosynthesis; gluconeogenesis. It participates in carbohydrate degradation; glycolysis; D-glyceraldehyde 3-phosphate and glycerone phosphate from D-glucose: step 2/4. In terms of biological role, catalyzes the reversible isomerization of glucose-6-phosphate to fructose-6-phosphate. This Glaesserella parasuis serovar 5 (strain SH0165) (Haemophilus parasuis) protein is Glucose-6-phosphate isomerase.